The primary structure comprises 74 residues: Lambda-hexatoxin-Hv1e (74 aa).

The signal sequence occupies residues M1–A22. A propeptide spanning residues G23 to F35 is cleaved from the precursor. 4 cysteine pairs are disulfide-bonded: C40–C54, C47–C59, C50–C51, and C53–C69.

Belongs to the neurotoxin 11 (kappa toxin) family. In terms of tissue distribution, expressed by the venom gland.

It is found in the secreted. Functionally, this excitatory toxin inhibits insect calcium-activated potassium (KCa) channels (Slo-type). This Hadronyche versuta (Blue mountains funnel-web spider) protein is Lambda-hexatoxin-Hv1e.